The following is a 401-amino-acid chain: Argininosuccinate synthase (401 aa).

ATP-binding positions include 9–17 (AFSGGLDTS) and Ala-35. Residues Tyr-88 and Ser-93 each contribute to the L-citrulline site. Gly-117 is an ATP binding site. Thr-119, Asn-123, and Asp-124 together coordinate L-aspartate. Asn-123 contributes to the L-citrulline binding site. L-citrulline is bound by residues Arg-127 and Tyr-273.

Belongs to the argininosuccinate synthase family. Type 1 subfamily. In terms of assembly, homotetramer.

It is found in the cytoplasm. It carries out the reaction L-citrulline + L-aspartate + ATP = 2-(N(omega)-L-arginino)succinate + AMP + diphosphate + H(+). The protein operates within amino-acid biosynthesis; L-arginine biosynthesis; L-arginine from L-ornithine and carbamoyl phosphate: step 2/3. This Xylella fastidiosa (strain Temecula1 / ATCC 700964) protein is Argininosuccinate synthase.